A 406-amino-acid polypeptide reads, in one-letter code: 5-methylthioadenosine/S-adenosylhomocysteine deaminase (406 aa).

Histidine 55 and histidine 57 together coordinate Zn(2+). 4 residues coordinate substrate: glutamate 84, arginine 136, arginine 148, and histidine 173. Residue histidine 200 participates in Zn(2+) binding. Residues glutamate 203 and aspartate 279 each coordinate substrate. Aspartate 279 provides a ligand contact to Zn(2+).

Belongs to the metallo-dependent hydrolases superfamily. MTA/SAH deaminase family. It depends on Zn(2+) as a cofactor.

It catalyses the reaction S-adenosyl-L-homocysteine + H2O + H(+) = S-inosyl-L-homocysteine + NH4(+). It carries out the reaction S-methyl-5'-thioadenosine + H2O + H(+) = S-methyl-5'-thioinosine + NH4(+). Its function is as follows. Catalyzes the deamination of 5-methylthioadenosine and S-adenosyl-L-homocysteine into 5-methylthioinosine and S-inosyl-L-homocysteine, respectively. Is also able to deaminate adenosine. Adenosine-5-monophosphate (AMP) and S-adenosyl-L-methionine (SAM) are not enzyme substrates. The sequence is that of 5-methylthioadenosine/S-adenosylhomocysteine deaminase (mtaD) from Thermotoga maritima (strain ATCC 43589 / DSM 3109 / JCM 10099 / NBRC 100826 / MSB8).